A 249-amino-acid polypeptide reads, in one-letter code: Aspartate/glutamate leucyltransferase (249 aa).

This sequence belongs to the R-transferase family. Bpt subfamily.

It localises to the cytoplasm. It catalyses the reaction N-terminal L-glutamyl-[protein] + L-leucyl-tRNA(Leu) = N-terminal L-leucyl-L-glutamyl-[protein] + tRNA(Leu) + H(+). The catalysed reaction is N-terminal L-aspartyl-[protein] + L-leucyl-tRNA(Leu) = N-terminal L-leucyl-L-aspartyl-[protein] + tRNA(Leu) + H(+). Functionally, functions in the N-end rule pathway of protein degradation where it conjugates Leu from its aminoacyl-tRNA to the N-termini of proteins containing an N-terminal aspartate or glutamate. In Brucella abortus (strain 2308), this protein is Aspartate/glutamate leucyltransferase.